A 509-amino-acid chain; its full sequence is Putative thymidine phosphorylase (509 aa).

The protein belongs to the thymidine/pyrimidine-nucleoside phosphorylase family. Type 2 subfamily.

It catalyses the reaction thymidine + phosphate = 2-deoxy-alpha-D-ribose 1-phosphate + thymine. This chain is Putative thymidine phosphorylase, found in Bradyrhizobium sp. (strain ORS 278).